Consider the following 238-residue polypeptide: MNKAILAVAMVLLLAGCATKPEEIGRAPDLSPVAAHLGMQNNPQFNGYPARPGKASYSLWDQRSTNFFKDPRAATPGDVLTVIISINDRANLDNKTDRERVSKGIYGGGGSFATSSITGAAAGGDMDASINTHSDSKSKGKGTIERSEDIRLQIAAIVTDTLPNGNLIIRGSQEVRVNNELRVLNVAGVVRPRDISGNNTISYDKIAEARISYGGRGRLSEIQQPPYGQQILDQFSPF.

Positions 1–16 (MNKAILAVAMVLLLAG) are cleaved as a signal peptide. Cysteine 17 carries the N-palmitoyl cysteine lipid modification. Cysteine 17 is lipidated: S-diacylglycerol cysteine.

The protein belongs to the FlgH family. In terms of assembly, the basal body constitutes a major portion of the flagellar organelle and consists of four rings (L,P,S, and M) mounted on a central rod.

The protein resides in the cell outer membrane. It localises to the bacterial flagellum basal body. Assembles around the rod to form the L-ring and probably protects the motor/basal body from shearing forces during rotation. The chain is Flagellar L-ring protein from Brucella canis (strain ATCC 23365 / NCTC 10854 / RM-666).